We begin with the raw amino-acid sequence, 862 residues long: Valine--tRNA ligase (862 aa).

Residues Asn-44 to His-53 carry the 'HIGH' region motif. Residues Cys-176, Cys-179, Cys-344, Cys-347, Cys-417, Cys-420, Cys-438, and Cys-441 each contribute to the Zn(2+) site. A 'KMSKS' region motif is present at residues Lys-528–Ser-532. Residue Lys-531 coordinates ATP. Residues Arg-802–Gly-862 adopt a coiled-coil conformation.

This sequence belongs to the class-I aminoacyl-tRNA synthetase family. ValS type 1 subfamily. As to quaternary structure, monomer. Zn(2+) is required as a cofactor.

It localises to the cytoplasm. It carries out the reaction tRNA(Val) + L-valine + ATP = L-valyl-tRNA(Val) + AMP + diphosphate. In terms of biological role, catalyzes the attachment of valine to tRNA(Val). As ValRS can inadvertently accommodate and process structurally similar amino acids such as threonine, to avoid such errors, it has a 'posttransfer' editing activity that hydrolyzes mischarged Thr-tRNA(Val) in a tRNA-dependent manner. The sequence is that of Valine--tRNA ligase from Thermus thermophilus (strain ATCC 27634 / DSM 579 / HB8).